We begin with the raw amino-acid sequence, 289 residues long: Carbonyl reductase [NADPH] 1 (289 aa).

Serine 2 carries the N-acetylserine modification. A Phosphoserine modification is found at serine 2. Residues 10-34 (VTGA…GDVV), 63-64 (DI), and asparagine 90 each bind NADP(+). Residues 95-97 (FQL) and glutamine 106 contribute to the glutathione site. Serine 140 provides a ligand contact to substrate. 193-194 (TY) is a glutathione binding site. Residue tyrosine 194 is the Proton acceptor of the active site. NADP(+)-binding positions include 194–198 (YGVTK) and 231–233 (VRT). Lysine 239 bears the N6-1-carboxyethyl lysine mark.

It belongs to the short-chain dehydrogenases/reductases (SDR) family. Monomer. Expressed in kidney (at protein level).

Its subcellular location is the cytoplasm. It catalyses the reaction a secondary alcohol + NADP(+) = a ketone + NADPH + H(+). The enzyme catalyses prostaglandin E1 + NADP(+) = 15-oxoprostaglandin E1 + NADPH + H(+). It carries out the reaction prostaglandin F2alpha + NADP(+) = prostaglandin E2 + NADPH + H(+). The catalysed reaction is prostaglandin D2 + NADP(+) = 15-oxoprostaglandin D2 + NADPH + H(+). It catalyses the reaction prostaglandin E2 + NADP(+) = 15-oxoprostaglandin E2 + NADPH + H(+). The enzyme catalyses prostaglandin F2alpha + NADP(+) = 15-oxoprostaglandin F2alpha + NADPH + H(+). It carries out the reaction menadione + NADPH + H(+) = menadiol + NADP(+). The catalysed reaction is daunorubicin + NADPH + H(+) = 13-dihydrodaunorubicin + NADP(+). It catalyses the reaction S-nitrosoglutathione + NADPH + H(+) = S-(hydroxysulfenamide)glutathione + NADP(+). The enzyme catalyses a primary alcohol + NADP(+) = an aldehyde + NADPH + H(+). It carries out the reaction cortisol + NADPH + H(+) = 20beta-dihydrocortisol + NADP(+). The catalysed reaction is corticosterone + NADPH + H(+) = 20beta-dihydrocorticosterone + NADP(+). Its function is as follows. NADPH-dependent reductase with broad substrate specificity. Catalyzes the reduction of a wide variety of carbonyl compounds including quinones, prostaglandins, menadione, plus various xenobiotics. Catalyzes the reduction of the antitumor anthracyclines doxorubicin and daunorubicin to the cardiotoxic compounds doxorubicinol and daunorubicinol. Can convert prostaglandin E2 to prostaglandin F2-alpha. Can bind glutathione, which explains its higher affinity for glutathione-conjugated substrates. Catalyzes the reduction of S-nitrosoglutathione. In addition, participates in the glucocorticoid metabolism by catalyzing the NADPH-dependent cortisol/corticosterone into 20beta-dihydrocortisol (20b-DHF) or 20beta-corticosterone (20b-DHB), which are weak agonists of NR3C1 and NR3C2 in adipose tissue. The polypeptide is Carbonyl reductase [NADPH] 1 (Sus scrofa (Pig)).